The sequence spans 931 residues: Netrin receptor UNC5C (931 aa).

A signal peptide spans 1–39 (MGKGLEGTAARCGLGMGYLLHSVVLPALAVLGASRPGSA). The Extracellular portion of the chain corresponds to 40 to 380 (AQDDDFFHEL…APDSDDVALY (341 aa)). Residues 62-159 (PHFLIEPEEA…AGTTKSRKAY (98 aa)) enclose the Ig-like domain. Cystine bridges form between Cys-83-Cys-144, Cys-95-Cys-142, Cys-188-Cys-239, Cys-272-Cys-309, Cys-276-Cys-313, Cys-287-Cys-299, Cys-328-Cys-362, Cys-332-Cys-367, and Cys-340-Cys-352. The region spanning 161–256 (RIAYLRKTFE…KRKSTTATVI (96 aa)) is the Ig-like C2-type domain. Residue Asn-236 is glycosylated (N-linked (GlcNAc...) asparagine). 2 consecutive TSP type-1 domains span residues 260 to 314 (NGGW…TLCP) and 316 to 368 (DGKW…GLCM). N-linked (GlcNAc...) asparagine glycosylation is present at Asn-361. A helical transmembrane segment spans residues 381 to 401 (VGIVIAVIVCLAISVVVALFV). Residues 402-931 (YRKNHRDFES…VVSLAAEGNY (530 aa)) are Cytoplasmic-facing. The ZU5 domain occupies 530–664 (CTAFGTFNSL…EACHILTETL (135 aa)). Residues 850-929 (QKLCSSLDAP…ETVVSLAAEG (80 aa)) enclose the Death domain.

The protein belongs to the unc-5 family. As to expression, restricted to proprioceptive neurons.

It localises to the cell membrane. Its subcellular location is the cell surface. It is found in the synapse. The protein localises to the synaptosome. The protein resides in the cell projection. It localises to the axon. Its subcellular location is the dendrite. It is found in the growth cone. The protein localises to the lamellipodium. The protein resides in the filopodium. In terms of biological role, receptor for netrin required for axon guidance. Mediates axon repulsion of neuronal growth cones in the developing nervous system upon ligand binding. Involved in dorsal root ganglion axon projection towards the spinal cord. The polypeptide is Netrin receptor UNC5C (UNC5C) (Gallus gallus (Chicken)).